The chain runs to 96 residues: Evasin P1078 (96 aa).

The first 28 residues, 1–28, serve as a signal peptide directing secretion; it reads MAFNTITFLQWAVFVAILFNMNLHSASA. 3 disulfides stabilise this stretch: Cys-48-Cys-67, Cys-52-Cys-69, and Cys-63-Cys-80. A glycan (N-linked (GlcNAc...) asparagine) is linked at Asn-51. Asn-74 is a glycosylation site (N-linked (GlcNAc...) asparagine).

Its subcellular location is the secreted. Its function is as follows. Salivary chemokine-binding protein which binds to host chemokines CXCL1, CXCL2, CXCL3, CXCL5, CXCL6, CXCL11 and CXCL13. This is Evasin P1078 from Ixodes ricinus (Common tick).